A 436-amino-acid polypeptide reads, in one-letter code: Testican-3 (436 aa).

The signal sequence occupies residues 1-22 (MLKVSAVLCVCAAAWCSQSLAA). Cystine bridges form between Cys90–Cys101, Cys95–Cys111, Cys139–Cys169, Cys142–Cys162, Cys151–Cys183, Cys317–Cys341, Cys352–Cys359, and Cys361–Cys380. The Kazal-like domain occupies 133 to 185 (GPILSTCKQCPVVYPSPVCGSDGHTYSFQCKLEYQACVLGKQISVKCEGHCPC). A Thyroglobulin type-1 domain is found at 314-380 (DPPCQTELSN…GSRINGVADC (67 aa)). O-linked (Xyl...) (glycosaminoglycan) serine glycosylation is found at Ser387 and Ser392. Residues 393 to 436 (GDFHEWTDDEDDEDDIMNDEDEIEDDDEDEGDDDDGGDDHDGYI) are disordered. Positions 399-430 (TDDEDDEDDIMNDEDEIEDDDEDEGDDDDGGD) are enriched in acidic residues.

Contains chondroitin sulfate and heparan sulfate O-linked oligosaccharides. As to expression, expressed in brain.

It localises to the secreted. The protein resides in the extracellular space. Its subcellular location is the extracellular matrix. May participate in diverse steps of neurogenesis. Inhibits the processing of pro-matrix metalloproteinase 2 (MMP-2) by MT1-MMP and MT3-MMP. May interfere with tumor invasion. The protein is Testican-3 (SPOCK3) of Pongo abelii (Sumatran orangutan).